We begin with the raw amino-acid sequence, 129 residues long: UPF0344 protein MW0851 (129 aa).

Helical transmembrane passes span 1–21 (MLHL…ATYL), 36–56 (LHMI…WILI), 67–87 (MLLT…EVSI), and 99–119 (MFWI…ILPL).

This sequence belongs to the UPF0344 family.

It localises to the cell membrane. The sequence is that of UPF0344 protein MW0851 from Staphylococcus aureus (strain MW2).